The sequence spans 445 residues: Phosphoglucosamine mutase (445 aa).

The Phosphoserine intermediate role is filled by Ser102. Mg(2+) contacts are provided by Ser102, Asp241, Asp243, and Asp245. Residue Ser102 is modified to Phosphoserine.

It belongs to the phosphohexose mutase family. Requires Mg(2+) as cofactor. In terms of processing, activated by phosphorylation.

The enzyme catalyses alpha-D-glucosamine 1-phosphate = D-glucosamine 6-phosphate. Its function is as follows. Catalyzes the conversion of glucosamine-6-phosphate to glucosamine-1-phosphate. The protein is Phosphoglucosamine mutase of Novosphingobium aromaticivorans (strain ATCC 700278 / DSM 12444 / CCUG 56034 / CIP 105152 / NBRC 16084 / F199).